The chain runs to 578 residues: Isocitrate dehydrogenase kinase/phosphatase (578 aa).

Residues 315–321 (APGIRGM) and lysine 336 each bind ATP. The active site involves aspartate 371.

This sequence belongs to the AceK family.

It localises to the cytoplasm. It carries out the reaction L-seryl-[isocitrate dehydrogenase] + ATP = O-phospho-L-seryl-[isocitrate dehydrogenase] + ADP + H(+). Its function is as follows. Bifunctional enzyme which can phosphorylate or dephosphorylate isocitrate dehydrogenase (IDH) on a specific serine residue. This is a regulatory mechanism which enables bacteria to bypass the Krebs cycle via the glyoxylate shunt in response to the source of carbon. When bacteria are grown on glucose, IDH is fully active and unphosphorylated, but when grown on acetate or ethanol, the activity of IDH declines drastically concomitant with its phosphorylation. The protein is Isocitrate dehydrogenase kinase/phosphatase of Escherichia coli O17:K52:H18 (strain UMN026 / ExPEC).